Here is a 350-residue protein sequence, read N- to C-terminus: Nicotinate-nucleotide--dimethylbenzimidazole phosphoribosyltransferase (350 aa).

The active-site Proton acceptor is the Glu318.

Belongs to the CobT family.

The catalysed reaction is 5,6-dimethylbenzimidazole + nicotinate beta-D-ribonucleotide = alpha-ribazole 5'-phosphate + nicotinate + H(+). It functions in the pathway nucleoside biosynthesis; alpha-ribazole biosynthesis; alpha-ribazole from 5,6-dimethylbenzimidazole: step 1/2. Functionally, catalyzes the synthesis of alpha-ribazole-5'-phosphate from nicotinate mononucleotide (NAMN) and 5,6-dimethylbenzimidazole (DMB). In Citrifermentans bemidjiense (strain ATCC BAA-1014 / DSM 16622 / JCM 12645 / Bem) (Geobacter bemidjiensis), this protein is Nicotinate-nucleotide--dimethylbenzimidazole phosphoribosyltransferase.